The primary structure comprises 280 residues: Energy-coupling factor transporter ATP-binding protein EcfA2 (280 aa).

Residues 3 to 245 (IEFKNVSYTY…VELLESKQLG (243 aa)) form the ABC transporter domain. 40–47 (GHTGSGKS) lines the ATP pocket.

Belongs to the ABC transporter superfamily. Energy-coupling factor EcfA family. In terms of assembly, forms a stable energy-coupling factor (ECF) transporter complex composed of 2 membrane-embedded substrate-binding proteins (S component), 2 ATP-binding proteins (A component) and 2 transmembrane proteins (T component).

The protein resides in the cell membrane. In terms of biological role, ATP-binding (A) component of a common energy-coupling factor (ECF) ABC-transporter complex. Unlike classic ABC transporters this ECF transporter provides the energy necessary to transport a number of different substrates. The polypeptide is Energy-coupling factor transporter ATP-binding protein EcfA2 (Streptococcus agalactiae serotype Ia (strain ATCC 27591 / A909 / CDC SS700)).